The chain runs to 130 residues: Small ribosomal subunit protein uS9 (130 aa).

The interval 105-130 (TRDSRMKERKKPGLKGARRAPQFSKR) is disordered. Residues 111-130 (KERKKPGLKGARRAPQFSKR) show a composition bias toward basic residues.

The protein belongs to the universal ribosomal protein uS9 family.

The polypeptide is Small ribosomal subunit protein uS9 (Listeria welshimeri serovar 6b (strain ATCC 35897 / DSM 20650 / CCUG 15529 / CIP 8149 / NCTC 11857 / SLCC 5334 / V8)).